The primary structure comprises 390 residues: COP9/Signalosome and eIF3 complex-shared subunit 1 (390 aa).

Positions 188-351 constitute a PCI domain; the sequence is QAAKVMTALL…RTLIVSSYQH (164 aa).

It belongs to the eIF-3 subunit M family. In terms of assembly, component of the eukaryotic translation initiation factor 3 (eIF-3) complex. Within the eIF-3 complex, interacts directly with eif-3.F. Component of the CSN complex, composed of csn-1, csn-2, csn-3, csn-4, csn-5, csn-6 and csn-7. Within the CSN complex, interacts directly with csn-1 and csn-4.

The protein localises to the cytoplasm. Its function is as follows. Component of the eukaryotic translation initiation factor 3 (eIF-3) complex, which is involved in protein synthesis of a specialized repertoire of mRNAs and, together with other initiation factors, stimulates binding of mRNA and methionyl-tRNAi to the 40S ribosome. The eIF-3 complex specifically targets and initiates translation of a subset of mRNAs involved in cell proliferation (Potential). Component of the COP9 signalosome complex (CSN), a complex involved in various cellular and developmental processes. The CSN complex is an essential regulator of the ubiquitin (Ubl) conjugation pathway by mediating the deneddylation of the cullin subunits of the SCF-type E3 ligase complexes, leading to decrease the Ubl ligase activity of SCF. The CSN complex plays an essential role in embryogenesis and oogenesis and is required to regulate microtubule stability in the early embryo. Mediates mei-1 targeting for degradation at the meiosis to mitosis transition via deneddylation of cul-3. The protein is COP9/Signalosome and eIF3 complex-shared subunit 1 of Caenorhabditis elegans.